We begin with the raw amino-acid sequence, 182 residues long: Putative manganese efflux pump MntP (182 aa).

The next 6 membrane-spanning stretches (helical) occupy residues 6–26, 37–57, 72–92, 101–121, 131–151, and 162–182; these read LIPL…VSLG, ILYI…IGMV, FAGA…SILE, IGIS…SVGL, IITI…GLLL, and YGEI…LFPI.

Belongs to the MntP (TC 9.B.29) family.

It localises to the cell membrane. Its function is as follows. Probably functions as a manganese efflux pump. This chain is Putative manganese efflux pump MntP, found in Bacillus mycoides (strain KBAB4) (Bacillus weihenstephanensis).